Consider the following 461-residue polypeptide: Alkaline phosphatase 4 (461 aa).

The N-terminal stretch at 1 to 41 (MKKMSLFQNMKSKLLPIAAVSVLTAGIFAGAELQQTEKASA) is a signal peptide. Asp-58 is a Mg(2+) binding site. Asp-58 contributes to the Zn(2+) binding site. Ser-108 (phosphoserine intermediate) is an active-site residue. Positions 161 and 282 each coordinate Mg(2+). Asp-287, His-291, Asp-329, His-330, and His-423 together coordinate Zn(2+).

This sequence belongs to the alkaline phosphatase family. As to quaternary structure, monomer. The cofactor is Mg(2+). It depends on Zn(2+) as a cofactor.

The enzyme catalyses a phosphate monoester + H2O = an alcohol + phosphate. The polypeptide is Alkaline phosphatase 4 (phoA) (Bacillus subtilis (strain 168)).